The following is a 276-amino-acid chain: NADPH-dependent 7-cyano-7-deazaguanine reductase (276 aa).

A substrate-binding site is contributed by 83–85 (IES). NADPH is bound at residue 85-86 (SK). The Thioimide intermediate role is filled by cysteine 184. Aspartate 191 acts as the Proton donor in catalysis. 223–224 (HE) is a binding site for substrate. 252 to 253 (RG) provides a ligand contact to NADPH.

Belongs to the GTP cyclohydrolase I family. QueF type 2 subfamily. Homodimer.

The protein resides in the cytoplasm. The catalysed reaction is 7-aminomethyl-7-carbaguanine + 2 NADP(+) = 7-cyano-7-deazaguanine + 2 NADPH + 3 H(+). It participates in tRNA modification; tRNA-queuosine biosynthesis. Its function is as follows. Catalyzes the NADPH-dependent reduction of 7-cyano-7-deazaguanine (preQ0) to 7-aminomethyl-7-deazaguanine (preQ1). This chain is NADPH-dependent 7-cyano-7-deazaguanine reductase, found in Pseudomonas fluorescens (strain Pf0-1).